The sequence spans 158 residues: uncharacterized protein (158 aa).

The next 3 helical transmembrane spans lie at 45–65 (GIFF…PAVI), 76–96 (LAIG…IFAW), and 106–126 (FILV…VFAL).

This sequence to U.parvum UU007, UU041 and UU042.

Its subcellular location is the cell membrane. This is an uncharacterized protein from Ureaplasma parvum serovar 3 (strain ATCC 700970).